Reading from the N-terminus, the 877-residue chain is Leucine--tRNA ligase (877 aa).

A 'HIGH' region motif is present at residues 43-53 (PYPSGRIHMGH). A 'KMSKS' region motif is present at residues 628-632 (KMSKS). K631 contacts ATP.

Belongs to the class-I aminoacyl-tRNA synthetase family.

It is found in the cytoplasm. The catalysed reaction is tRNA(Leu) + L-leucine + ATP = L-leucyl-tRNA(Leu) + AMP + diphosphate. The chain is Leucine--tRNA ligase from Brucella suis biovar 1 (strain 1330).